A 125-amino-acid chain; its full sequence is uncharacterized protein (125 aa).

Helical transmembrane passes span 22–44 and 54–73; these read TPLMVLIFFMVIDYLGDIVNAAV and YMGIAKIVSVLVVIIVSVLM.

Belongs to the bacteriophage holin family. Cp-1 holin subfamily.

The protein localises to the cell membrane. This is an uncharacterized protein from Clostridium acetobutylicum (strain ATCC 824 / DSM 792 / JCM 1419 / IAM 19013 / LMG 5710 / NBRC 13948 / NRRL B-527 / VKM B-1787 / 2291 / W).